We begin with the raw amino-acid sequence, 326 residues long: Acetyl-coenzyme A carboxylase carboxyl transferase subunit alpha (326 aa).

The CoA carboxyltransferase C-terminal domain maps to 45–298; the sequence is LEARAMQLRE…KQVLLENLDE (254 aa).

This sequence belongs to the AccA family. Acetyl-CoA carboxylase is a heterohexamer composed of biotin carboxyl carrier protein (AccB), biotin carboxylase (AccC) and two subunits each of ACCase subunit alpha (AccA) and ACCase subunit beta (AccD).

The protein resides in the cytoplasm. The catalysed reaction is N(6)-carboxybiotinyl-L-lysyl-[protein] + acetyl-CoA = N(6)-biotinyl-L-lysyl-[protein] + malonyl-CoA. It participates in lipid metabolism; malonyl-CoA biosynthesis; malonyl-CoA from acetyl-CoA: step 1/1. Its function is as follows. Component of the acetyl coenzyme A carboxylase (ACC) complex. First, biotin carboxylase catalyzes the carboxylation of biotin on its carrier protein (BCCP) and then the CO(2) group is transferred by the carboxyltransferase to acetyl-CoA to form malonyl-CoA. The chain is Acetyl-coenzyme A carboxylase carboxyl transferase subunit alpha from Nostoc punctiforme (strain ATCC 29133 / PCC 73102).